Reading from the N-terminus, the 287-residue chain is Diphthine methyl ester synthase (287 aa).

S-adenosyl-L-methionine contacts are provided by residues leucine 9, aspartate 84, glycine 87, 112-113, valine 163, valine 221, and histidine 248; that span reads SI.

It belongs to the diphthine synthase family.

The protein localises to the cytoplasm. It carries out the reaction 2-[(3S)-amino-3-carboxypropyl]-L-histidyl-[translation elongation factor 2] + 4 S-adenosyl-L-methionine = diphthine methyl ester-[translation elongation factor 2] + 4 S-adenosyl-L-homocysteine + 3 H(+). It functions in the pathway protein modification; peptidyl-diphthamide biosynthesis. In terms of biological role, S-adenosyl-L-methionine-dependent methyltransferase that catalyzes four methylations of the modified target histidine residue in translation elongation factor 2 (EF-2), to form an intermediate called diphthine methyl ester. The four successive methylation reactions represent the second step of diphthamide biosynthesis. The sequence is that of Diphthine methyl ester synthase (DPH5) from Gibberella zeae (strain ATCC MYA-4620 / CBS 123657 / FGSC 9075 / NRRL 31084 / PH-1) (Wheat head blight fungus).